Consider the following 342-residue polypeptide: N-acetyl-gamma-glutamyl-phosphate reductase (342 aa).

Residue Cys-147 is part of the active site.

This sequence belongs to the NAGSA dehydrogenase family. Type 1 subfamily.

The protein localises to the cytoplasm. The catalysed reaction is N-acetyl-L-glutamate 5-semialdehyde + phosphate + NADP(+) = N-acetyl-L-glutamyl 5-phosphate + NADPH + H(+). The protein operates within amino-acid biosynthesis; L-arginine biosynthesis; N(2)-acetyl-L-ornithine from L-glutamate: step 3/4. In terms of biological role, catalyzes the NADPH-dependent reduction of N-acetyl-5-glutamyl phosphate to yield N-acetyl-L-glutamate 5-semialdehyde. The polypeptide is N-acetyl-gamma-glutamyl-phosphate reductase (Campylobacter jejuni (strain RM1221)).